Reading from the N-terminus, the 115-residue chain is UPF0212 protein MJ0068 (115 aa).

It belongs to the UPF0212 family.

The polypeptide is UPF0212 protein MJ0068 (Methanocaldococcus jannaschii (strain ATCC 43067 / DSM 2661 / JAL-1 / JCM 10045 / NBRC 100440) (Methanococcus jannaschii)).